The following is a 254-amino-acid chain: uncharacterized protein (254 aa).

It belongs to the nucleoside-specific channel-forming outer membrane porin (Tsx) (TC 1.B.10) family.

This is an uncharacterized protein from Escherichia coli (strain K12).